Here is a 144-residue protein sequence, read N- to C-terminus: Large ribosomal subunit protein uL13 (144 aa).

It belongs to the universal ribosomal protein uL13 family. As to quaternary structure, part of the 50S ribosomal subunit.

Its function is as follows. This protein is one of the early assembly proteins of the 50S ribosomal subunit, although it is not seen to bind rRNA by itself. It is important during the early stages of 50S assembly. This Buchnera aphidicola subsp. Baizongia pistaciae (strain Bp) protein is Large ribosomal subunit protein uL13.